We begin with the raw amino-acid sequence, 647 residues long: DNA mismatch repair protein MutL (647 aa).

This sequence belongs to the DNA mismatch repair MutL/HexB family.

This protein is involved in the repair of mismatches in DNA. It is required for dam-dependent methyl-directed DNA mismatch repair. May act as a 'molecular matchmaker', a protein that promotes the formation of a stable complex between two or more DNA-binding proteins in an ATP-dependent manner without itself being part of a final effector complex. This Bacillus cereus (strain 03BB102) protein is DNA mismatch repair protein MutL.